Consider the following 494-residue polypeptide: MKKQAFSSEQYLNLQRDHILERINQFDGKLYLEFGGKMLEDFHAARVLPGYEPDNKIKLLQELKEQVEVVIAINASNIEHSKARGDLGISYDQEVLRLIDKFNELGIFVGSVVITQYAGQPAADAFRNQLEKNGIDSYLHYPIKGYPTDMDHIISPEGMGKNDYIKTSRNLIVVTAPGPGSGKLATCMSNMYHDQINGIKSGYAKFETFPVWNLPLHHPVNLAYEAATADLDDVNMIDPFHLQTYGETTVNYNRDIEIFPVLKRMLERILGKSPYASPTDMGVNMVGFAITDDEAAVEASKQEIIRRYYQTVLDFKAEKVGEAAVKKIELLMNDLGITPADRKVAVVARQKAEETGGPALALELPNGDIVTGKNSELFGPTAAALINAIKKSADIAKEVKLIEPEVVKPIQGLKIDHLGSRNPRLHSNEILIALAITATENPDAARAMEELGNLKGSEAHSTIILTDEDKNVLRKLGINVTFDPYYQYDRLYRK.

This sequence belongs to the UPF0371 family.

This chain is UPF0371 protein SPG_0310, found in Streptococcus pneumoniae serotype 19F (strain G54).